Here is a 220-residue protein sequence, read N- to C-terminus: MAKRTKAEALKTRQELIETAIAQFAQHGVSKTTLNDIADAANVTRGAIYWHFENKTQLFNEMWLQQPSLRELIQEHLTAGLEHDPFQQLREKLIVGLQYIAKIPRQQALLKILYHKCEFNDEMLAEGVIREKMGFNPQTLREVLQACQQQGCVANNLDLDVVMIIIDGAFSGIVQNWLMNMAGYDLYKQAPALVDNVLRMFMPDENITKLIHQTNELSVM.

Residues 10–70 (LKTRQELIET…EMWLQQPSLR (61 aa)) enclose the HTH tetR-type domain. Positions 33–52 (TLNDIADAANVTRGAIYWHF) form a DNA-binding region, H-T-H motif.

Its function is as follows. Potential regulator protein for the acrEF/envCD genes. This is Probable acrEF/envCD operon repressor (envR) from Escherichia coli O157:H7.